The primary structure comprises 307 residues: Ribosomal RNA small subunit methyltransferase H (307 aa).

S-adenosyl-L-methionine is bound by residues 34-36, aspartate 54, phenylalanine 79, aspartate 101, and glutamine 108; that span reads GGH.

This sequence belongs to the methyltransferase superfamily. RsmH family.

The protein localises to the cytoplasm. It catalyses the reaction cytidine(1402) in 16S rRNA + S-adenosyl-L-methionine = N(4)-methylcytidine(1402) in 16S rRNA + S-adenosyl-L-homocysteine + H(+). In terms of biological role, specifically methylates the N4 position of cytidine in position 1402 (C1402) of 16S rRNA. In Vesicomyosocius okutanii subsp. Calyptogena okutanii (strain HA), this protein is Ribosomal RNA small subunit methyltransferase H.